The following is a 297-amino-acid chain: ER membrane protein complex subunit 2-B (297 aa).

3 TPR repeats span residues histidine 87–asparagine 120, glutamine 155–asparagine 188, and tyrosine 192–serine 225.

Belongs to the EMC2 family. As to quaternary structure, component of the ER membrane protein complex (EMC).

It is found in the endoplasmic reticulum membrane. Functionally, part of the endoplasmic reticulum membrane protein complex (EMC) that enables the energy-independent insertion into endoplasmic reticulum membranes of newly synthesized membrane proteins. Preferentially accommodates proteins with transmembrane domains that are weakly hydrophobic or contain destabilizing features such as charged and aromatic residues. Involved in the cotranslational insertion of multi-pass membrane proteins in which stop-transfer membrane-anchor sequences become ER membrane spanning helices. It is also required for the post-translational insertion of tail-anchored/TA proteins in endoplasmic reticulum membranes. By mediating the proper cotranslational insertion of N-terminal transmembrane domains in an N-exo topology, with translocated N-terminus in the lumen of the ER, controls the topology of multi-pass membrane proteins. By regulating the insertion of various proteins in membranes, it is indirectly involved in many cellular processes. The protein is ER membrane protein complex subunit 2-B (emc2-b) of Xenopus laevis (African clawed frog).